The sequence spans 239 residues: Small ribosomal subunit protein uS3 (239 aa).

The KH type-2 domain maps to 39–107 (VRQVLRKKMS…SVHINVIEVR (69 aa)). A disordered region spans residues 214-239 (GQEKQDDGSRGDRNADRSSRRSREVR). Positions 216–239 (EKQDDGSRGDRNADRSSRRSREVR) are enriched in basic and acidic residues.

The protein belongs to the universal ribosomal protein uS3 family. As to quaternary structure, part of the 30S ribosomal subunit. Forms a tight complex with proteins S10 and S14.

In terms of biological role, binds the lower part of the 30S subunit head. Binds mRNA in the 70S ribosome, positioning it for translation. This is Small ribosomal subunit protein uS3 from Xylella fastidiosa (strain M12).